Reading from the N-terminus, the 477-residue chain is Ribulose bisphosphate carboxylase large chain (477 aa).

The propeptide occupies M1–S2. The residue at position 3 (P3) is an N-acetylproline. Position 14 is an N6,N6,N6-trimethyllysine (K14). Positions 123 and 173 each coordinate substrate. The active-site Proton acceptor is the K175. K177 provides a ligand contact to substrate. 3 residues coordinate Mg(2+): K201, D203, and E204. At K201 the chain carries N6-carboxylysine. H294 serves as the catalytic Proton acceptor. 3 residues coordinate substrate: R295, H327, and S379.

The protein belongs to the RuBisCO large chain family. Type I subfamily. In terms of assembly, heterohexadecamer of 8 large chains and 8 small chains; disulfide-linked. The disulfide link is formed within the large subunit homodimers. It depends on Mg(2+) as a cofactor. Post-translationally, the disulfide bond which can form in the large chain dimeric partners within the hexadecamer appears to be associated with oxidative stress and protein turnover.

It localises to the plastid. It is found in the chloroplast. It carries out the reaction 2 (2R)-3-phosphoglycerate + 2 H(+) = D-ribulose 1,5-bisphosphate + CO2 + H2O. It catalyses the reaction D-ribulose 1,5-bisphosphate + O2 = 2-phosphoglycolate + (2R)-3-phosphoglycerate + 2 H(+). Functionally, ruBisCO catalyzes two reactions: the carboxylation of D-ribulose 1,5-bisphosphate, the primary event in carbon dioxide fixation, as well as the oxidative fragmentation of the pentose substrate in the photorespiration process. Both reactions occur simultaneously and in competition at the same active site. This chain is Ribulose bisphosphate carboxylase large chain, found in Hyophorbe lagenicaulis (Bottle palm).